A 505-amino-acid chain; its full sequence is Glucan endo-1,3-beta-glucosidase 4 (505 aa).

Positions 1 to 23 (MLLPRWFAEALLLLLSILACSNA) are cleaved as a signal peptide. Residues Asn70 and Asn110 are each glycosylated (N-linked (GlcNAc...) asparagine). The active-site Proton donor is Glu119. Asn178 and Asn256 each carry an N-linked (GlcNAc...) asparagine glycan. Glu266 serves as the catalytic Nucleophile. N-linked (GlcNAc...) asparagine glycosylation is found at Asn298, Asn338, and Asn357. Cysteines 363 and 426 form a disulfide. A glycan (N-linked (GlcNAc...) asparagine) is linked at Asn453. Ala474 carries GPI-anchor amidated alanine lipidation. A propeptide spans 475–505 (NARIIFSYHLPILAPLALTLLQLLLQHDRLL) (removed in mature form).

The protein belongs to the glycosyl hydrolase 17 family. Contains two additional disulfide bonds.

It is found in the cell membrane. It carries out the reaction Hydrolysis of (1-&gt;3)-beta-D-glucosidic linkages in (1-&gt;3)-beta-D-glucans.. The chain is Glucan endo-1,3-beta-glucosidase 4 from Arabidopsis thaliana (Mouse-ear cress).